We begin with the raw amino-acid sequence, 1312 residues long: Beta-N-acetylhexosaminidase (1312 aa).

Positions 1-33 (MKHEKQQRFSIRKYAVGAASVLIGFAFQAQTVA) are cleaved as a signal peptide. The segment covering 38–59 (TPTTTENQPTIHTVSDSPQSSE) has biased composition (polar residues). The segment at 38-178 (TPTTTENQPT…ATEAGKERAA (141 aa)) is disordered. The span at 118–177 (AEKETANKKAEEASPKKEEAKEVDSKESNTDKTDKDKPAKKDEAKAEADKPATEAGKERA) shows a compositional bias: basic and acidic residues. Catalytic domain stretches follow at residues 176–616 (RAAT…TPEA) and 621–1046 (EAKR…PAVT). G5 domains follow at residues 1059 to 1138 (NVET…GAPV) and 1150 to 1230 (TTEV…GTMV). Residues 1244 to 1290 (EEKPKLEIPSQPAPSTAPAEESKVLPQDPAPVVTEKKLPETGTHDSA) form a disordered region. The span at 1277–1286 (TEKKLPETGT) shows a compositional bias: basic and acidic residues. An LPXTG sorting signal motif is present at residues 1281-1285 (LPETG). The residue at position 1284 (Thr1284) is a Pentaglycyl murein peptidoglycan amidated threonine. The propeptide at 1285–1312 (GTHDSAGLVVAGLMSTLAAYGLTKRKED) is removed by sortase.

Belongs to the glycosyl hydrolase 20 family.

Its subcellular location is the secreted. It localises to the cell wall. It catalyses the reaction Hydrolysis of terminal non-reducing N-acetyl-D-hexosamine residues in N-acetyl-beta-D-hexosaminides.. The chain is Beta-N-acetylhexosaminidase (strH) from Streptococcus pneumoniae serotype 4 (strain ATCC BAA-334 / TIGR4).